The chain runs to 616 residues: Chaperone protein HscA homolog (616 aa).

Belongs to the heat shock protein 70 family.

Chaperone involved in the maturation of iron-sulfur cluster-containing proteins. Has a low intrinsic ATPase activity which is markedly stimulated by HscB. This Histophilus somni (strain 129Pt) (Haemophilus somnus) protein is Chaperone protein HscA homolog.